The chain runs to 142 residues: DNA-directed RNA polymerase II subunit RPB4 (142 aa).

The protein belongs to the eukaryotic RPB4 RNA polymerase subunit family. Component of the RNA polymerase II (Pol II) core complex consisting of 12 subunits: a ten-subunit catalytic core composed of POLR2A/RPB1, POLR2B/RPB2, POLR2C/RPB3, POLR2I/RPB9, POLR2J/RPB11, POLR2E/RPABC1, POLR2F/RPABC2, POLR2H/RPABC3, POLR2K/RPABC4 and POLR2L/RPABC5 and a mobile stalk composed of two subunits POLR2D/RPB4 and POLR2G/RPB7, protruding from the core and functioning primarily in transcription initiation. Part of Pol II(G) complex, in which Pol II core associates with an additional subunit POLR2M; unlike conventional Pol II, Pol II(G) functions as a transcriptional repressor. Part of Pol II pre-initiation complex (PIC), in which Pol II core assembles with Mediator, general transcription factors and other specific initiation factors including GTF2E1, GTF2E2, GTF2F1, GTF2F2, TCEA1, ERCC2, ERCC3, GTF2H2, GTF2H3, GTF2H4, GTF2H5, GTF2A1, GTF2A2, GTF2B and TBP; this large multi-subunit PIC complex mediates DNA unwinding and targets Pol II core to the transcription start site where the first phosphodiester bond forms.

The protein resides in the nucleus. Its function is as follows. Core component of RNA polymerase II (Pol II), a DNA-dependent RNA polymerase which synthesizes mRNA precursors and many functional non-coding RNAs using the four ribonucleoside triphosphates as substrates. Pol II is the central component of the basal RNA polymerase II transcription machinery. It is composed of mobile elements that move relative to each other. POLR2D/RPB4 is part of a subcomplex with POLR2G/RPB7 that binds to a pocket formed by POLR2A/RPB1, POLR2B/RPB2 and POLR2F/RPABC2 at the base of the clamp element. The POLR2D/RPB4-POLR2G/RPB7 subcomplex seems to lock the clamp via POLR2G/RPB7 in the closed conformation thus preventing double-stranded DNA to enter the active site cleft. The POLR2D/RPB4-POLR2G/RPB7 subcomplex binds single-stranded DNA and RNA. This is DNA-directed RNA polymerase II subunit RPB4 (POLR2D) from Bos taurus (Bovine).